The chain runs to 181 residues: LEM domain-containing protein 1 (181 aa).

Residues Met1–Pro45 enclose the LEM domain. A helical; Signal-anchor for type II membrane protein transmembrane segment spans residues Phe152 to Leu172.

As to expression, testis-specific. Isoform 6 is detected in 17 of 18 colon cancer tissues examined.

The protein localises to the membrane. The sequence is that of LEM domain-containing protein 1 (LEMD1) from Homo sapiens (Human).